The following is an 898-amino-acid chain: Magnesium-transporting ATPase, P-type 1 (898 aa).

At 1–94 (MFKEIFTRLI…QPSPWWVHLW (94 aa)) the chain is on the cytoplasmic side. Residues 95 to 115 (VCYRNPFNILLTILGAISYAT) traverse the membrane as a helical segment. Position 116 (glutamate 116) is a topological domain, extracellular. The helical transmembrane segment at 117-137 (DLFAAGVIALMVAISTLLNFI) threads the bilayer. Over 138-287 (QEARSTKAAD…PNAFQQGISR (150 aa)) the chain is Cytoplasmic. A helical membrane pass occupies residues 288-308 (VSMLLIRFMLVMAPVVLLING). Residues 309–317 (YTKGDWWEA) lie on the Extracellular side of the membrane. A helical membrane pass occupies residues 318–335 (ALFALSVAVGLTPEMLPM). Glutamate 331 provides a ligand contact to Mg(2+). At 336 to 695 (IVTSTLARGA…IEGRRTFANM (360 aa)) the chain is on the cytoplasmic side. Residue aspartate 373 is the 4-aspartylphosphate intermediate of the active site. Residues aspartate 641, aspartate 645, and asparagine 709 each contribute to the Mg(2+) site. A helical transmembrane segment spans residues 696 to 715 (LKYIKMTASSNFGNVFSVLV). Residues 716–724 (ASAFLPFLP) lie on the Extracellular side of the membrane. Residues 725-744 (MLPLHLLIQNLLYDVSQVAI) traverse the membrane as a helical segment. Mg(2+)-binding residues include asparagine 734 and aspartate 738. Residues 745–766 (PFDNVDDEQIQKPQRWNPADLG) lie on the Cytoplasmic side of the membrane. The helical transmembrane segment at 767–790 (RFMIFFGPISSIFDILTFCLMWWV) threads the bilayer. Topologically, residues 791-799 (FHANTPETQ) are extracellular. A helical transmembrane segment spans residues 800 to 818 (TLFQSGWFVVGLLSQTLIV). Topologically, residues 819–831 (HMIRTRRVPFIQS) are cytoplasmic. A helical membrane pass occupies residues 832–851 (CASWPLMIMTVIVMIVGIAL). Topologically, residues 852–866 (PFSPLASYLQLQALP) are extracellular. A helical membrane pass occupies residues 867-886 (LSYFPWLVAILAGYMTLTQL). The Cytoplasmic segment spans residues 887–898 (VKGFYSRRYGWQ).

Belongs to the cation transport ATPase (P-type) (TC 3.A.3) family. Type IIIB subfamily.

Its subcellular location is the cell inner membrane. It catalyses the reaction Mg(2+)(out) + ATP + H2O = Mg(2+)(in) + ADP + phosphate + H(+). Functionally, mediates magnesium influx to the cytosol. The protein is Magnesium-transporting ATPase, P-type 1 (mgtA) of Escherichia coli O157:H7.